The primary structure comprises 439 residues: Chitinase-like protein Idgf1 (439 aa).

An N-terminal signal peptide occupies residues 1–20 (MRFQLFYILGLLSVTSLTQA). In terms of domain architecture, GH18 spans 22–439 (NNLVCYYDST…IVRSIKYFMG (418 aa)). Cys-26 and Cys-53 are oxidised to a cystine. Asn-122, Asn-218, and Asn-346 each carry an N-linked (GlcNAc...) asparagine glycan. Residues Cys-340 and Cys-423 are joined by a disulfide bond.

This sequence belongs to the glycosyl hydrolase 18 family. IDGF subfamily. Glycosylated.

The protein resides in the secreted. Cooperates with insulin-like peptides to stimulate the proliferation, polarization and motility of imaginal disk cells. May act by stabilizing the binding of insulin-like peptides to its receptor through a simultaneous interaction with both molecules to form a multiprotein signaling complex. This is Chitinase-like protein Idgf1 (Idgf1) from Drosophila simulans (Fruit fly).